The chain runs to 209 residues: Uracil phosphoribosyltransferase (209 aa).

5-phospho-alpha-D-ribose 1-diphosphate is bound by residues arginine 79, arginine 104, and 131–139 (DPMLATGNS). Residues isoleucine 194 and 199–201 (GDA) contribute to the uracil site. Aspartate 200 contributes to the 5-phospho-alpha-D-ribose 1-diphosphate binding site.

This sequence belongs to the UPRTase family. Mg(2+) serves as cofactor.

It carries out the reaction UMP + diphosphate = 5-phospho-alpha-D-ribose 1-diphosphate + uracil. The protein operates within pyrimidine metabolism; UMP biosynthesis via salvage pathway; UMP from uracil: step 1/1. With respect to regulation, allosterically activated by GTP. Its function is as follows. Catalyzes the conversion of uracil and 5-phospho-alpha-D-ribose 1-diphosphate (PRPP) to UMP and diphosphate. This Delftia acidovorans (strain DSM 14801 / SPH-1) protein is Uracil phosphoribosyltransferase.